We begin with the raw amino-acid sequence, 240 residues long: Probable transcriptional regulatory protein MADE_1004275 (240 aa).

Belongs to the TACO1 family.

The protein resides in the cytoplasm. In Alteromonas mediterranea (strain DSM 17117 / CIP 110805 / LMG 28347 / Deep ecotype), this protein is Probable transcriptional regulatory protein MADE_1004275.